Here is a 674-residue protein sequence, read N- to C-terminus: Probable protein phosphatase 2C 66 (674 aa).

The residue at position 125 (S125) is a Phosphoserine. Disordered stretches follow at residues 153–175 and 202–247; these read YSGPIESTKKTEKEKPKKIRKKP and KSVI…KQSM. The region spanning 244–665 is the PPM-type phosphatase domain; the sequence is KQSMNSVLDV…DDVSVIVISL (422 aa). Residues D282 and G283 each contribute to the Mn(2+) site. Residues 373-384 show a composition bias toward basic and acidic residues; it reads NNKTKSDNRCDQ. The interval 373-392 is disordered; it reads NNKTKSDNRCDQKGSNSTTT. Residues D593 and D656 each contribute to the Mn(2+) site.

The protein belongs to the PP2C family. Requires Mg(2+) as cofactor. The cofactor is Mn(2+). In terms of tissue distribution, expressed at low level in seedlings, roots, leaves, stems, young inflorescences, flowers and siliques.

It is found in the nucleus. The enzyme catalyses O-phospho-L-seryl-[protein] + H2O = L-seryl-[protein] + phosphate. It carries out the reaction O-phospho-L-threonyl-[protein] + H2O = L-threonyl-[protein] + phosphate. In Arabidopsis thaliana (Mouse-ear cress), this protein is Probable protein phosphatase 2C 66 (PLL2).